A 436-amino-acid polypeptide reads, in one-letter code: Putative permease MJ0326 (436 aa).

The next 12 helical transmembrane spans lie at 24–44 (LAGI…PQIL), 51–71 (FGAV…VMGL), 79–99 (LAPG…GMGI), 103–123 (VALG…LTKI), 139–159 (TAVG…GIIV), 171–191 (LMEP…ILVS), 194–214 (VIGA…ILGI), 235–255 (LDIM…FFFV), 322–342 (GFVS…YPVV), 345–365 (IPPY…MRSV), 381–401 (ITLL…LGFI), and 416–436 (VHWL…YLSG).

It belongs to the nucleobase:cation symporter-2 (NCS2) (TC 2.A.40) family. Azg-like subfamily.

The protein resides in the cell membrane. The sequence is that of Putative permease MJ0326 from Methanocaldococcus jannaschii (strain ATCC 43067 / DSM 2661 / JAL-1 / JCM 10045 / NBRC 100440) (Methanococcus jannaschii).